We begin with the raw amino-acid sequence, 427 residues long: Glucose-1-phosphate adenylyltransferase (427 aa).

Residues tyrosine 121, glycine 186, 201–202 (EK), and serine 219 contribute to the alpha-D-glucose 1-phosphate site.

It belongs to the bacterial/plant glucose-1-phosphate adenylyltransferase family. As to quaternary structure, homotetramer.

It catalyses the reaction alpha-D-glucose 1-phosphate + ATP + H(+) = ADP-alpha-D-glucose + diphosphate. It functions in the pathway glycan biosynthesis; glycogen biosynthesis. Its function is as follows. Involved in the biosynthesis of ADP-glucose, a building block required for the elongation reactions to produce glycogen. Catalyzes the reaction between ATP and alpha-D-glucose 1-phosphate (G1P) to produce pyrophosphate and ADP-Glc. In Corynebacterium diphtheriae (strain ATCC 700971 / NCTC 13129 / Biotype gravis), this protein is Glucose-1-phosphate adenylyltransferase.